Here is a 118-residue protein sequence, read N- to C-terminus: Cell division protein FtsB (118 aa).

Topologically, residues 1–6 (MRNWRW) are cytoplasmic. The chain crosses the membrane as a helical span at residues 7–24 (LLLVLAALLSWLQHRFWF). The Periplasmic segment spans residues 25 to 118 (GPGNSGEVRM…DLAQPRREKR (94 aa)). A coiled-coil region spans residues 30–66 (GEVRMLQVQIVQQHQENERLRQRNASLAAEVKNLKDG). The disordered stretch occupies residues 97 to 118 (PLPNDTSADHGVDLAQPRREKR). Residues 103–118 (SADHGVDLAQPRREKR) show a composition bias toward basic and acidic residues.

This sequence belongs to the FtsB family. As to quaternary structure, part of a complex composed of FtsB, FtsL and FtsQ.

The protein localises to the cell inner membrane. In terms of biological role, essential cell division protein. May link together the upstream cell division proteins, which are predominantly cytoplasmic, with the downstream cell division proteins, which are predominantly periplasmic. The protein is Cell division protein FtsB of Xylella fastidiosa (strain 9a5c).